A 34-amino-acid polypeptide reads, in one-letter code: Beta/mu-theraphotoxin-Pe1a (34 aa).

Cystine bridges form between Cys2–Cys16, Cys9–Cys21, and Cys15–Cys28.

Belongs to the neurotoxin 10 (Hwtx-1) family. 54 (ProTx-1) subfamily. As to expression, expressed by the venom gland.

The protein localises to the secreted. Ion channel impairing toxin that inhibits voltage-gated sodium channels. The recombinantly expressed toxin shows a weak activity against Nav1.7/SCN9A (25% inhibition at 10 uM), and shifts the voltage dependence of channel activation to more depolarized potentials. The sequence is that of Beta/mu-theraphotoxin-Pe1a from Phormingochilus everetti (Malaysian purple earth tiger tarantula).